The following is a 205-amino-acid chain: Urease accessory protein UreG (205 aa).

14–21 lines the GTP pocket; it reads GPVGSGKT.

This sequence belongs to the SIMIBI class G3E GTPase family. UreG subfamily. Homodimer. UreD, UreF and UreG form a complex that acts as a GTP-hydrolysis-dependent molecular chaperone, activating the urease apoprotein by helping to assemble the nickel containing metallocenter of UreC. The UreE protein probably delivers the nickel.

The protein resides in the cytoplasm. Its function is as follows. Facilitates the functional incorporation of the urease nickel metallocenter. This process requires GTP hydrolysis, probably effectuated by UreG. The sequence is that of Urease accessory protein UreG from Citrobacter koseri (strain ATCC BAA-895 / CDC 4225-83 / SGSC4696).